Here is a 304-residue protein sequence, read N- to C-terminus: N-acetyl-D-glucosamine kinase (304 aa).

ATP contacts are provided by residues 4–11 (GFDMGGTK) and 133–140 (GVGGGLIV). Zn(2+)-binding residues include histidine 157, cysteine 177, cysteine 179, and cysteine 184.

The protein belongs to the ROK (NagC/XylR) family. NagK subfamily.

It catalyses the reaction N-acetyl-D-glucosamine + ATP = N-acetyl-D-glucosamine 6-phosphate + ADP + H(+). It participates in cell wall biogenesis; peptidoglycan recycling. Functionally, catalyzes the phosphorylation of N-acetyl-D-glucosamine (GlcNAc) derived from cell-wall degradation, yielding GlcNAc-6-P. The sequence is that of N-acetyl-D-glucosamine kinase from Yersinia pseudotuberculosis serotype O:1b (strain IP 31758).